Here is a 450-residue protein sequence, read N- to C-terminus: Beta-glucosidase (450 aa).

Glu-166 serves as the catalytic Proton donor. Glu-355 serves as the catalytic Nucleophile.

Belongs to the glycosyl hydrolase 1 family.

The enzyme catalyses Hydrolysis of terminal, non-reducing beta-D-glucosyl residues with release of beta-D-glucose.. This is Beta-glucosidase (bglA) from Niallia circulans (Bacillus circulans).